A 22-amino-acid polypeptide reads, in one-letter code: Mu-conotoxin TIIIA (22 aa).

Cystine bridges form between Cys-4/Cys-16, Cys-5/Cys-21, and Cys-11/Cys-22. 4-hydroxyproline occurs at positions 8 and 18. Cys-22 carries the cysteine amide modification.

This sequence belongs to the conotoxin M superfamily. Expressed by the venom duct.

It is found in the secreted. Functionally, mu-conotoxins block voltage-gated sodium channels (Nav). This synthetic toxin reversibly and potently blocks rNav1.4/SCN4A (IC(50) is 9 nM) and rNav1.2/SCN2A (IC(50) is 40 nM). It also moderately blocks rNav1.1/SCN1A, rNav1.3/SCN3A, and rNav1.6/SCN8A. The block of SCN1A and SCN2A is modified when beta-subunits are coexpressed with alpha subunits. Hence, blocks of channels containing beta-1 and beta-3 subunits are more potent (compared to channels without beta subunits), whereas blocks of channels containing beta-2 and beta-4 subunits are less potent (compared to channels without beta subunits). This chain is Mu-conotoxin TIIIA, found in Conus tulipa (Fish-hunting cone snail).